Reading from the N-terminus, the 840-residue chain is Subtilisin-like protease SBT2.3 (840 aa).

The first 27 residues, 1 to 27 (MVRVMLVRFGFLLLMISFVFLSNNTLG), serve as a signal peptide directing secretion. Positions 28–146 (QQQDDDDDSA…IVLDYSVRTA (119 aa)) are cleaved as a propeptide — activation peptide. The 109-residue stretch at 38–146 (VYIVTLKQPP…IVLDYSVRTA (109 aa)) folds into the Inhibitor I9 domain. The span at 61 to 81 (KSKFTPKLRPRNNSRKRHGKS) shows a compositional bias: basic residues. A disordered region spans residues 61–85 (KSKFTPKLRPRNNSRKRHGKSKIPS). Residue Asn72 is glycosylated (N-linked (GlcNAc...) asparagine). Residues 148–694 (TYTPQFMGLP…SGFVNATAAL (547 aa)) enclose the Peptidase S8 domain. Asp180 acts as the Charge relay system in catalysis. N-linked (GlcNAc...) asparagine glycans are attached at residues Asn193 and Asn241. His255 acts as the Charge relay system in catalysis. 5 N-linked (GlcNAc...) asparagine glycosylation sites follow: Asn398, Asn427, Asn480, Asn525, and Asn553. The region spanning 418–513 (MISAFHALNN…MDMPGIIIPS (96 aa)) is the PA domain. The Charge relay system role is filled by Ser619. N-linked (GlcNAc...) asparagine glycosylation is found at Asn689, Asn715, Asn723, Asn767, and Asn808.

The protein belongs to the peptidase S8 family.

Its subcellular location is the secreted. In Arabidopsis thaliana (Mouse-ear cress), this protein is Subtilisin-like protease SBT2.3.